A 686-amino-acid polypeptide reads, in one-letter code: Leucine-rich repeat-containing protein 49 (686 aa).

7 LRR repeats span residues 113–134 (HLRL…SNLQ), 135–156 (RLIF…STLK), 157–178 (SLRV…ENLK), 179–200 (NLDV…NHLC), 201–222 (DLRV…NGLD), 223–244 (SLTE…DNLP), and 245–266 (CLQR…SCLA). The LRRCT domain maps to 279–317 (NPIAQESWYKHTVLQNMMQLRQLDMKRITEEERRVASVV). Disordered stretches follow at residues 311–332 (RRVA…HKQS) and 359–381 (ASTQ…DGGN). The stretch at 319 to 341 (KKEEEKKRESHKQSLLKEKKRLT) forms a coiled coil.

In terms of assembly, part of the neuronal tubulin polyglutamylase complex which contains TPGS1, TPGS2, TTLL1, LRRC49 and NICN1. Interacts with PCM1; TTLL1, TPGS1, TPGS2 and LRRC49.

The protein resides in the cytoplasm. It is found in the cytoskeleton. It localises to the microtubule organizing center. Its subcellular location is the centrosome. The protein localises to the centriolar satellite. Its function is as follows. Subunit of the tubulin polyglutamylase complex (TPGC). The complex mediates cilia and flagella polyglutamylation which is essential for their biogenesis and motility. The polypeptide is Leucine-rich repeat-containing protein 49 (Lrrc49) (Mus musculus (Mouse)).